Consider the following 346-residue polypeptide: Uroporphyrinogen decarboxylase (346 aa).

Substrate contacts are provided by residues 21 to 25 (RQAGR), Asp-71, Tyr-146, Ser-201, and His-316.

It belongs to the uroporphyrinogen decarboxylase family. As to quaternary structure, homodimer.

It is found in the cytoplasm. It carries out the reaction uroporphyrinogen III + 4 H(+) = coproporphyrinogen III + 4 CO2. It participates in porphyrin-containing compound metabolism; protoporphyrin-IX biosynthesis; coproporphyrinogen-III from 5-aminolevulinate: step 4/4. Its function is as follows. Catalyzes the decarboxylation of four acetate groups of uroporphyrinogen-III to yield coproporphyrinogen-III. The polypeptide is Uroporphyrinogen decarboxylase (Rickettsia rickettsii (strain Iowa)).